Consider the following 137-residue polypeptide: MRHGKAHRKLGRTSAHRTAMFANMSASLIKHEQIVTTLPKAKELRPFVEKLVTLAKRGDLHARRQAISIVRDVEQVGKLFAAIGPRYKERQGGYIRVLKAGFRYGDNAPLAVIEFVDRDVSAKGKDSGPVYSNDSDD.

This sequence belongs to the bacterial ribosomal protein bL17 family. In terms of assembly, part of the 50S ribosomal subunit. Contacts protein L32.

The chain is Large ribosomal subunit protein bL17 from Caulobacter sp. (strain K31).